Consider the following 578-residue polypeptide: MEVKGEIYRVSGPVVTVTGLQAKMYDLVKVGDEGLMGEVIQILGPKTIIQVYEETAGIKPGEPCYSTGSSLSVELGPGLLSSIYDGVQRPLHVLLERTGGFIGRGVTADGLDHKKLWEFKPVAKKGDSVKGGDVIGVVQETVNIEHKIMVPPDISGTISDIKSGNFTVVDTICTLTDGTELQMMQKWPVRRPRPVRTKLTPTRPLVTGMRILDGLFPVAKGGTAAIPGPFGSGKTVTQQSLAKWSDTEIVVYIGCGERGNEMADVLSEFPELEDPQTGRPLMERTVLIANTSNMPVAAREASVYTGITIAEYFRDMGLDVSLMADSTSRWAEAMREISSRLEEMPGEEGYPAYLSARLAEFYERAGVAESLCGETGSITVIGAVSPPGGDFSEPVTQNTLRIVKVFWALDAKLSQRRHFPAINWLNSYSLYKDSLNDWFADNVAPDYVPLRERAMEMLQTESELQEIVQLVGSDALPDDQQLLLEITRMLREIFLQQNAFHPVDAYSPFAQQYRILKAIMKWGDAAMEALKSGVPVPEILKLESKNVLAKVKYEEKFDESMNAVLTQMDKEFASLRGR.

228–235 (GPFGSGKT) provides a ligand contact to ATP.

The protein belongs to the ATPase alpha/beta chains family. As to quaternary structure, has multiple subunits with at least A(3), B(3), C, D, E, F, H, I and proteolipid K(x).

The protein resides in the cell membrane. The enzyme catalyses ATP + H2O + 4 H(+)(in) = ADP + phosphate + 5 H(+)(out). Its function is as follows. Component of the A-type ATP synthase that produces ATP from ADP in the presence of a proton gradient across the membrane. The A chain is the catalytic subunit. In Methanosarcina barkeri (strain Fusaro / DSM 804), this protein is A-type ATP synthase subunit A.